Here is a 518-residue protein sequence, read N- to C-terminus: Xylose import ATP-binding protein XylG (518 aa).

ABC transporter domains follow at residues 6-245 and 262-507; these read LQMN…VGRE and FEAR…LSHP. Residue 38–45 coordinates ATP; the sequence is GENGTGKS.

The protein belongs to the ABC transporter superfamily. Xylose importer (TC 3.A.1.2.4) family. The complex is composed of two ATP-binding proteins (XylG), two transmembrane proteins (XylH) and a solute-binding protein (XylF).

The protein localises to the cell inner membrane. It catalyses the reaction D-xylose(out) + ATP + H2O = D-xylose(in) + ADP + phosphate + H(+). Its function is as follows. Part of the ABC transporter complex XylFGH involved in xylose import. Responsible for energy coupling to the transport system. The polypeptide is Xylose import ATP-binding protein XylG (Pseudomonas savastanoi pv. phaseolicola (strain 1448A / Race 6) (Pseudomonas syringae pv. phaseolicola (strain 1448A / Race 6))).